Here is a 274-residue protein sequence, read N- to C-terminus: MEQSSGAVIRSYAKINLFLDVTKKRDDGYHEILSLFQNISLYDRLIITKIDRGLEIKTNVDIENNILYKTWDVFSSNFKEPEFGLRIVLEKNIPMQAGLGGGSSNAAALLFYLSDQLKIPKNKIIKIAAKIGSDVPFFLIGGTAVVKGKGEIIEPLPPLLGYYVKLITANGISTKEAYNLLNSTLFNKAPCSPYALYEAYYHRNIDEIKRCTYNIFEKVIAKQNREIAQNIKKLKKNSIVSTLTGSGSAVYGISFREGDFNFVPRGVEYEEINI.

Lys-14 is a catalytic residue. 94-104 (PMQAGLGGGSS) serves as a coordination point for ATP. Residue Asp-134 is part of the active site.

It belongs to the GHMP kinase family. IspE subfamily.

It carries out the reaction 4-CDP-2-C-methyl-D-erythritol + ATP = 4-CDP-2-C-methyl-D-erythritol 2-phosphate + ADP + H(+). It participates in isoprenoid biosynthesis; isopentenyl diphosphate biosynthesis via DXP pathway; isopentenyl diphosphate from 1-deoxy-D-xylulose 5-phosphate: step 3/6. Catalyzes the phosphorylation of the position 2 hydroxy group of 4-diphosphocytidyl-2C-methyl-D-erythritol. The chain is 4-diphosphocytidyl-2-C-methyl-D-erythritol kinase from Thermosipho melanesiensis (strain DSM 12029 / CIP 104789 / BI429).